The primary structure comprises 201 residues: Phospholipase A2 inhibitor PIP (201 aa).

A signal peptide spans 1–19; the sequence is MKSLQTICLLFIFIARGTS. Disulfide bonds link C22–C46, C25–C32, C39–C67, C73–C94, C95–C100, C118–C143, C136–C165, and C169–C191. A glycan (N-linked (GlcNAc...) asparagine) is linked at N157.

In terms of assembly, homohexamer. Glycosylated. Expressed by the liver.

The protein resides in the secreted. In terms of biological role, inhibits the enzymatic activity of phospholipase A2 (PA2). Binds to the major PLA2 toxin of D.russelli siamensis (Daboiatoxin, AC Q7T2R1, and AC Q7T3T5) at 1-2-fold molar excess of inhibitor to toxin. It exhibits broad spectra in neutralizing the toxicity of various snake venoms and toxins and inhibits the formation of edema in mice. May bind to PLA2 through its proline-rich hydrophobic core region. This is Phospholipase A2 inhibitor PIP from Malayopython reticulatus (Reticulate python).